The following is a 531-amino-acid chain: MGSCLSSDLPPRAGAGAGASPGWPQRWRRRRQRGVERGGAVSGGGGGVFSIGVGGKKLHHGGGGGGEMTEEELAKVEGRVCVNGASAAACLHTQQGRKGTNQDAMVVWENFNTSDSVFCGVFDGHGPYGHFVAKKVRDSLPVKIRTLWKTSANEDTSSHQNGSISGSVNSEESPVVDDEWGEYADDSEKLPEMFLPLKQSYFKAFKLMDKELKMHPTVDCFCSGSTAVTLVKQGLDLVVGNLGDSRAIMGTRDAANNLTAVQLTVDLKPNLPREAARIQQCRGRVFALQDEPEVARVWLPNNDSPGLAMARAFGDFCLKDYGLISVPQISYRRLTEKDEFIILATDGVWDVLSNKEAVDIVAAAPSRATAARALVDCAVRSWRLKFPTSKSDDCAVVCLFLDHAKSPDLIQENESEEETTEDVAIPDTVAKVDQDIAQGDAHISSEEQITEPALQHSYTLRDVDEIVPVEEPPVSKEPERCGSARSLADCISTNEEEEWSALEGVTRVNSLLNLPRILSGEKRSTSWRKRR.

Residues 1-47 (MGSCLSSDLPPRAGAGAGASPGWPQRWRRRRQRGVERGGAVSGGGGG) form a disordered region. Residues 10-25 (PPRAGAGAGASPGWPQ) are compositionally biased toward low complexity. Positions 88-401 (AACLHTQQGR…DDCAVVCLFL (314 aa)) constitute a PPM-type phosphatase domain. The Mn(2+) site is built by aspartate 123 and glycine 124. A compositionally biased stretch (polar residues) spans 151–172 (SANEDTSSHQNGSISGSVNSEE). A disordered region spans residues 151–176 (SANEDTSSHQNGSISGSVNSEESPVV). Mn(2+) is bound by residues aspartate 346 and aspartate 392.

This sequence belongs to the PP2C family. It depends on Mg(2+) as a cofactor. Requires Mn(2+) as cofactor.

The catalysed reaction is O-phospho-L-seryl-[protein] + H2O = L-seryl-[protein] + phosphate. It catalyses the reaction O-phospho-L-threonyl-[protein] + H2O = L-threonyl-[protein] + phosphate. The sequence is that of Probable protein phosphatase 2C 66 from Oryza sativa subsp. japonica (Rice).